A 396-amino-acid chain; its full sequence is Tryptophan synthase beta chain (396 aa).

At Lys-86 the chain carries N6-(pyridoxal phosphate)lysine.

It belongs to the TrpB family. As to quaternary structure, tetramer of two alpha and two beta chains. The cofactor is pyridoxal 5'-phosphate.

It catalyses the reaction (1S,2R)-1-C-(indol-3-yl)glycerol 3-phosphate + L-serine = D-glyceraldehyde 3-phosphate + L-tryptophan + H2O. The protein operates within amino-acid biosynthesis; L-tryptophan biosynthesis; L-tryptophan from chorismate: step 5/5. Its function is as follows. The beta subunit is responsible for the synthesis of L-tryptophan from indole and L-serine. This is Tryptophan synthase beta chain from Vibrio campbellii (strain ATCC BAA-1116).